A 549-amino-acid chain; its full sequence is Chaperonin GroEL (549 aa).

ATP contacts are provided by residues 29–32, Lys-50, 86–90, Gly-417, and Asp-499; these read TAGP and DGTTT.

This sequence belongs to the chaperonin (HSP60) family. As to quaternary structure, forms a cylinder of 14 subunits composed of two heptameric rings stacked back-to-back. Interacts with the co-chaperonin GroES.

It is found in the cytoplasm. The catalysed reaction is ATP + H2O + a folded polypeptide = ADP + phosphate + an unfolded polypeptide.. Its function is as follows. Together with its co-chaperonin GroES, plays an essential role in assisting protein folding. The GroEL-GroES system forms a nano-cage that allows encapsulation of the non-native substrate proteins and provides a physical environment optimized to promote and accelerate protein folding. This Anaplasma marginale (strain Florida) protein is Chaperonin GroEL.